The sequence spans 300 residues: MPWPAHCRHVTGEVGIYQTLKHKPLAEVRAAIRAGQYCSHTAGLGKGFLQANLAIMPEAYALDFMRYCQRNPKPCPLSGVSDTGNPMMTTMGGQIDIRTDVPAYNIYRDGRLAGSVTDIRDLWQDDFVAFALGCSFTFEHALQQAGIALWHIDNDKTVPMYRSGIDTVPAGPFRGKMVVSMRAIPEDRVAEAVEISRRFPLAHGAPVHWGDPAGLGITDLARPDWGDPVPVPEGHVPVFWACGVTPQVALEAASMPICITHKPGHMLISDIPEDAEIPILRPQDQHTSQTQQGETHDTHA.

This sequence belongs to the D-glutamate cyclase family.

This chain is Putative hydro-lyase Dshi_3152, found in Dinoroseobacter shibae (strain DSM 16493 / NCIMB 14021 / DFL 12).